The sequence spans 557 residues: Dihydroxy-acid dehydratase (557 aa).

Position 78 (D78) interacts with Mg(2+). A [2Fe-2S] cluster-binding site is contributed by C119. Positions 120 and 121 each coordinate Mg(2+). An N6-carboxylysine modification is found at K121. C194 is a [2Fe-2S] cluster binding site. E446 provides a ligand contact to Mg(2+). S472 functions as the Proton acceptor in the catalytic mechanism.

It belongs to the IlvD/Edd family. As to quaternary structure, homodimer. [2Fe-2S] cluster serves as cofactor. Requires Mg(2+) as cofactor.

The catalysed reaction is (2R)-2,3-dihydroxy-3-methylbutanoate = 3-methyl-2-oxobutanoate + H2O. The enzyme catalyses (2R,3R)-2,3-dihydroxy-3-methylpentanoate = (S)-3-methyl-2-oxopentanoate + H2O. It participates in amino-acid biosynthesis; L-isoleucine biosynthesis; L-isoleucine from 2-oxobutanoate: step 3/4. The protein operates within amino-acid biosynthesis; L-valine biosynthesis; L-valine from pyruvate: step 3/4. Functionally, functions in the biosynthesis of branched-chain amino acids. Catalyzes the dehydration of (2R,3R)-2,3-dihydroxy-3-methylpentanoate (2,3-dihydroxy-3-methylvalerate) into 2-oxo-3-methylpentanoate (2-oxo-3-methylvalerate) and of (2R)-2,3-dihydroxy-3-methylbutanoate (2,3-dihydroxyisovalerate) into 2-oxo-3-methylbutanoate (2-oxoisovalerate), the penultimate precursor to L-isoleucine and L-valine, respectively. The polypeptide is Dihydroxy-acid dehydratase (Desulfosudis oleivorans (strain DSM 6200 / JCM 39069 / Hxd3) (Desulfococcus oleovorans)).